Consider the following 433-residue polypeptide: MKALSEVFGKLVEKIRGVSYIDEATLQDLSREIQRALLKADVPLDMVKAFTDAAVKRIKEEKPPAGIPPREYLLYVLYEELVKLLGGEQPPEFKPTKKPYVVLLLGVEGSGKTTTAAKLAKLLVKRGYKVGLVETDTVRPAAFDQLRQLAEKIGVPFYGERDGKDAVEIARRGVQNLKNLDVVIVDTAGRHRNEEALLQEVKAIYEAVSPDEVVLVIDATVGKLAAAQAEAFMRYLPIHSVIITKMDSTARGGGALAAVAKTGAKVKFIGVGEDVDELEMFIPRKFVARVLGMGDLDALVERIKAVFEEEQVIQEIESGKLDLLTFKKQIDGLLKLGPLSKVFQMLPGGLAAKISEEQIELSQKNLKKWRAILSSMTVEELKNPELLNASRIRRIALGAGVTPRDVKEMLTVYENLKRMSKTLKRQLRMKMPR.

GTP-binding positions include 106–113 (GVEGSGKT), 186–190 (DTAGR), and 244–247 (TKMD).

The protein belongs to the GTP-binding SRP family. SRP54 subfamily. Part of the signal recognition particle protein translocation system, which is composed of SRP and FtsY. Archaeal SRP consists of a 7S RNA molecule of 300 nucleotides and two protein subunits: SRP54 and SRP19.

The protein localises to the cytoplasm. The catalysed reaction is GTP + H2O = GDP + phosphate + H(+). In terms of biological role, involved in targeting and insertion of nascent membrane proteins into the cytoplasmic membrane. Binds to the hydrophobic signal sequence of the ribosome-nascent chain (RNC) as it emerges from the ribosomes. The SRP-RNC complex is then targeted to the cytoplasmic membrane where it interacts with the SRP receptor FtsY. The polypeptide is Signal recognition particle 54 kDa protein (Pyrobaculum neutrophilum (strain DSM 2338 / JCM 9278 / NBRC 100436 / V24Sta) (Thermoproteus neutrophilus)).